We begin with the raw amino-acid sequence, 405 residues long: Probable glucan 1,3-beta-glucosidase A (405 aa).

An N-terminal signal peptide occupies residues 1–26 (MFPRISQAAILAHSLLAVCTSAATLA). Glutamate 198 (proton donor) is an active-site residue. Disulfide bonds link cysteine 278–cysteine 403 and cysteine 304–cysteine 330. Residue glutamate 296 is the Nucleophile of the active site.

The protein belongs to the glycosyl hydrolase 5 (cellulase A) family. Monomer. Requires Mn(2+) as cofactor.

The protein localises to the secreted. It carries out the reaction Successive hydrolysis of beta-D-glucose units from the non-reducing ends of (1-&gt;3)-beta-D-glucans, releasing alpha-glucose.. In terms of biological role, beta-glucanases participate in the metabolism of beta-glucan, the main structural component of the cell wall. It could also function biosynthetically as a transglycosylase. The chain is Probable glucan 1,3-beta-glucosidase A (exgA) from Emericella nidulans (strain FGSC A4 / ATCC 38163 / CBS 112.46 / NRRL 194 / M139) (Aspergillus nidulans).